A 483-amino-acid chain; its full sequence is Probable glycine dehydrogenase (decarboxylating) subunit 2 (483 aa).

A disordered region spans residues 1 to 24 (MLIFDHSRPGRTAAAQLPATGGDL). Lysine 264 carries the post-translational modification N6-(pyridoxal phosphate)lysine.

The protein belongs to the GcvP family. C-terminal subunit subfamily. The glycine cleavage system is composed of four proteins: P, T, L and H. In this organism, the P 'protein' is a heterodimer of two subunits. Pyridoxal 5'-phosphate is required as a cofactor.

The catalysed reaction is N(6)-[(R)-lipoyl]-L-lysyl-[glycine-cleavage complex H protein] + glycine + H(+) = N(6)-[(R)-S(8)-aminomethyldihydrolipoyl]-L-lysyl-[glycine-cleavage complex H protein] + CO2. Functionally, the glycine cleavage system catalyzes the degradation of glycine. The P protein binds the alpha-amino group of glycine through its pyridoxal phosphate cofactor; CO(2) is released and the remaining methylamine moiety is then transferred to the lipoamide cofactor of the H protein. In Thiobacillus denitrificans (strain ATCC 25259 / T1), this protein is Probable glycine dehydrogenase (decarboxylating) subunit 2.